Reading from the N-terminus, the 111-residue chain is Dynein light chain Tctex-type (111 aa).

Belongs to the dynein light chain Tctex-type family.

It localises to the cytoplasm. The protein resides in the cytoskeleton. Acts as a non-catalytic accessory component of a dynein complex. The polypeptide is Dynein light chain Tctex-type (dlc1) (Schizosaccharomyces pombe (strain 972 / ATCC 24843) (Fission yeast)).